Consider the following 357-residue polypeptide: Protein-glutamate methylesterase/protein-glutamine glutaminase (357 aa).

The Response regulatory domain occupies 3–120 (RVIVVDDSAF…LASMDLAALS (118 aa)). Aspartate 54 bears the 4-aspartylphosphate mark. The 193-residue stretch at 165 to 357 (ERSRRDIIAI…AERVASALYK (193 aa)) folds into the CheB-type methylesterase domain. Catalysis depends on residues serine 177, histidine 204, and aspartate 300.

Belongs to the CheB family. Phosphorylated by CheA. Phosphorylation of the N-terminal regulatory domain activates the methylesterase activity.

The protein resides in the cytoplasm. It catalyses the reaction [protein]-L-glutamate 5-O-methyl ester + H2O = L-glutamyl-[protein] + methanol + H(+). It carries out the reaction L-glutaminyl-[protein] + H2O = L-glutamyl-[protein] + NH4(+). In terms of biological role, involved in chemotaxis. Part of a chemotaxis signal transduction system that modulates chemotaxis in response to various stimuli. Catalyzes the demethylation of specific methylglutamate residues introduced into the chemoreceptors (methyl-accepting chemotaxis proteins or MCP) by CheR. Also mediates the irreversible deamidation of specific glutamine residues to glutamic acid. The polypeptide is Protein-glutamate methylesterase/protein-glutamine glutaminase (Lawsonia intracellularis (strain PHE/MN1-00)).